A 264-amino-acid polypeptide reads, in one-letter code: Thiazole synthase (264 aa).

The Schiff-base intermediate with DXP role is filled by K106. 1-deoxy-D-xylulose 5-phosphate is bound by residues G167, 193–194 (AG), and 215–216 (NS).

The protein belongs to the ThiG family. As to quaternary structure, homotetramer. Forms heterodimers with either ThiH or ThiS.

The protein localises to the cytoplasm. It carries out the reaction [ThiS sulfur-carrier protein]-C-terminal-Gly-aminoethanethioate + 2-iminoacetate + 1-deoxy-D-xylulose 5-phosphate = [ThiS sulfur-carrier protein]-C-terminal Gly-Gly + 2-[(2R,5Z)-2-carboxy-4-methylthiazol-5(2H)-ylidene]ethyl phosphate + 2 H2O + H(+). The protein operates within cofactor biosynthesis; thiamine diphosphate biosynthesis. Catalyzes the rearrangement of 1-deoxy-D-xylulose 5-phosphate (DXP) to produce the thiazole phosphate moiety of thiamine. Sulfur is provided by the thiocarboxylate moiety of the carrier protein ThiS. In vitro, sulfur can be provided by H(2)S. This chain is Thiazole synthase, found in Pseudomonas savastanoi pv. phaseolicola (strain 1448A / Race 6) (Pseudomonas syringae pv. phaseolicola (strain 1448A / Race 6)).